The chain runs to 556 residues: Guard cell S-type anion channel SLAC1 (556 aa).

Residues 1–103 (MERKQSNAHS…GIINGGDGRK (103 aa)) are disordered. Topologically, residues 1–189 (MERKQSNAHS…EQWPFLLRFP (189 aa)) are cytoplasmic. Positions 10–36 (STFADINEVEDEAEQELQQQENNNNKR) form a coiled coil. Over residues 25-34 (ELQQQENNNN) the composition is skewed to low complexity. Phosphoserine; by SRK2E is present on S59. Basic and acidic residues predominate over residues 69–79 (RESRERDDKKS). Phosphoserine; by SRK2E occurs at positions 86, 113, and 120. Residues 86–99 (SFGGFESGGIINGG) show a composition bias toward gly residues. Phosphoserine is present on S146. The helical transmembrane segment at 190 to 210 (IGCFGICLGLSSQAVLWLALA) threads the bilayer. Over 211–216 (KSPATN) the chain is Extracellular. The helical transmembrane segment at 217-237 (FLHITPLINLVVWLFSLVVLV) threads the bilayer. Topologically, residues 238–265 (SVSFTYILKCIFYFEAVKREYFHPVRVN) are cytoplasmic. Residues 266 to 286 (FFFAPWVVCMFLAISVPPMFS) traverse the membrane as a helical segment. The Extracellular portion of the chain corresponds to 287 to 295 (PNRKYLHPA). The helical transmembrane segment at 296-316 (IWCVFMGPYFFLELKIYGQWL) threads the bilayer. Topologically, residues 317–325 (SGGKRRLCK) are cytoplasmic. The helical transmembrane segment at 326–346 (VANPSSHLSVVGNFVGAILAS) threads the bilayer. Residues 347–352 (KVGWDE) are Extracellular-facing. The chain crosses the membrane as a helical span at residues 353–373 (VAKFLWAVGFAHYLVVFVTLY). The Cytoplasmic segment spans residues 374 to 388 (QRLPTSEALPKELHP). The helical transmembrane segment at 389 to 409 (VYSMFIAAPSAASIAWNTIYG) threads the bilayer. The Extracellular portion of the chain corresponds to 410–418 (QFDGCSRTC). Residues 419–439 (FFIALFLYISLVARINFFTGF) form a helical membrane-spanning segment. A topological domain (cytoplasmic) is located at residue K440. A helical transmembrane segment spans residues 441-463 (FSVAWWSYTFPMTTASVATIKYA). The Extracellular segment spans residues 464-479 (EAVPGYPSRALALTLS). Residues 480-500 (FISTAMVCVLFVSTLLHAFVW) traverse the membrane as a helical segment. The Cytoplasmic segment spans residues 501-556 (QTLFPNDLAIAITKRKLTREKKPFKRAYDLKRWTKQALAKKISAEKDFEAEEESHH).

The protein belongs to the SLAC1 S-type anion channel family. Homotrimer. Interacts with SRK2E, CPK6, CPK21, CPK23 and PP2CA. The channel is inactivated upon PP2CA and ABI1 binding. Interacts with KAT1, KAT2, KAT3/KC1 and AKT2. Interacts with GHR1. In terms of processing, phosphorylation by SRK2E, especially on Ser-120, activates the channel. Also phosphorylated and activated by CPK21 and CPK23. Abscisic acid (ABA) promotes phosphorylation. This phosphorylation is inhibited by ABI1. Phosphorylated and activated by GHR1; this phosphorylation is repressed by ABI2 but not ABI1. Phosphorylated by HT1 on N-terminus but not C-terminus. As to expression, preferentially expressed in guard cells. Also detected in the vascular strands close to the leaf margins.

The protein localises to the cell membrane. Activated by GHR1-mediated phosphorylation which is negatively regulated by ABI2 but not ABI1. Activation by SRK2E/OST1 and GHR1 is repressed by HT1. Its function is as follows. Slow, weak voltage-dependent S-type anion efflux channel involved in maintenance of anion homeostasis. Cl(-) efflux through SLAC1 causes membrane depolarization, which activates outward-rectifying K1 channels, leading to KCl and water efflux to reduce turgor further and cause stomatal closure, that reduces water loss and promotes leaf turgor. Essential for stomatal closure in response to CO(2), abscisic acid (ABA), ozone O(3), light/dark transitions, humidity change, calcium ions, hydrogen peroxide H(2)O(2), reactive oxygen species (ROS), and nitric oxide. Binds to the highly selective inward-rectifying potassium channels KAT1 and AKT2, and inhibits their activities. Functions as an essential negative regulator of inward potassium channels in guard cells. Essential for the efficient stomatal closure and opening in guard cells. Involved in the local and/or systemic stomatal responses (e.g. stomatal closure) to light stress. The chain is Guard cell S-type anion channel SLAC1 from Arabidopsis thaliana (Mouse-ear cress).